The sequence spans 280 residues: Bifunctional protein FolD (280 aa).

NADP(+) contacts are provided by residues 161–163 (GRS), Ser186, and Ile227.

Belongs to the tetrahydrofolate dehydrogenase/cyclohydrolase family. Homodimer.

It carries out the reaction (6R)-5,10-methylene-5,6,7,8-tetrahydrofolate + NADP(+) = (6R)-5,10-methenyltetrahydrofolate + NADPH. The enzyme catalyses (6R)-5,10-methenyltetrahydrofolate + H2O = (6R)-10-formyltetrahydrofolate + H(+). It functions in the pathway one-carbon metabolism; tetrahydrofolate interconversion. Functionally, catalyzes the oxidation of 5,10-methylenetetrahydrofolate to 5,10-methenyltetrahydrofolate and then the hydrolysis of 5,10-methenyltetrahydrofolate to 10-formyltetrahydrofolate. This chain is Bifunctional protein FolD, found in Caldanaerobacter subterraneus subsp. tengcongensis (strain DSM 15242 / JCM 11007 / NBRC 100824 / MB4) (Thermoanaerobacter tengcongensis).